The following is a 310-amino-acid chain: GMP synthase [glutamine-hydrolyzing] subunit B (310 aa).

One can recognise a GMPS ATP-PPase domain in the interval 2-185 (FDPKKFIDEA…LGLPDSIVYR (184 aa)). 29–35 (SGGVDSS) is an ATP binding site.

As to quaternary structure, heterodimer composed of a glutamine amidotransferase subunit (A) and a GMP-binding subunit (B).

It carries out the reaction XMP + L-glutamine + ATP + H2O = GMP + L-glutamate + AMP + diphosphate + 2 H(+). Its pathway is purine metabolism; GMP biosynthesis; GMP from XMP (L-Gln route): step 1/1. Functionally, catalyzes the synthesis of GMP from XMP. This Methanocaldococcus jannaschii (strain ATCC 43067 / DSM 2661 / JAL-1 / JCM 10045 / NBRC 100440) (Methanococcus jannaschii) protein is GMP synthase [glutamine-hydrolyzing] subunit B (guaAB).